Reading from the N-terminus, the 212-residue chain is Pyrrolidone-carboxylate peptidase (212 aa).

Residues E80, C143, and H165 contribute to the active site.

This sequence belongs to the peptidase C15 family. Homotetramer.

It is found in the cytoplasm. The catalysed reaction is Release of an N-terminal pyroglutamyl group from a polypeptide, the second amino acid generally not being Pro.. Removes 5-oxoproline from various penultimate amino acid residues except L-proline. This Vibrio vulnificus (strain YJ016) protein is Pyrrolidone-carboxylate peptidase.